The sequence spans 389 residues: Meiosis-specific protein MEI4 (389 aa).

An interaction with REC114 region spans residues 1–127; that stretch reads MDIQPWYLKT…LSQHFVESTD (127 aa).

Belongs to the MEI4L family. In terms of assembly, part of the MCD recombinosome complex, at least composed of IHO1, REC114 and MEI4. Forms a complex with REC114; the interaction is required for MEI4 stability. Interacts (via N-terminal domain) with REC114 (via C-terminal domain). Interacts with IHO1. As to expression, expressed in adult testis and brain and in embryonic ovary.

The protein resides in the chromosome. In terms of biological role, required for DNA double-strand breaks (DSBs) formation in unsynapsed regions during meiotic recombination. Probably acts by forming a complex with IHO1 and REC114, which activates DSBs formation in unsynapsed regions, an essential step to ensure completion of synapsis. The protein is Meiosis-specific protein MEI4 of Mus musculus (Mouse).